We begin with the raw amino-acid sequence, 486 residues long: Zinc metalloproteinase-disintegrin VMP-II (486 aa).

The N-terminal stretch at 1–20 is a signal peptide; the sequence is MIQVLLVTICLAVFPYQGSS. The propeptide occupies 21 to 190; the sequence is IILESGNVND…KASQSNLPPE (170 aa). Glutamine 191 carries the post-translational modification Pyrrolidone carboxylic acid. A Peptidase M12B domain is found at 197 to 394; that stretch reads RYIELVVVAD…HYTTCLYNEP (198 aa). Ca(2+) contacts are provided by glutamate 200 and aspartate 284. Cystine bridges form between cysteine 308/cysteine 389, cysteine 348/cysteine 372, and cysteine 350/cysteine 355. Histidine 333 serves as a coordination point for Zn(2+). The active site involves glutamate 334. Histidine 337 and histidine 343 together coordinate Zn(2+). Positions 389 and 392 each coordinate Ca(2+). The region spanning 402 to 486 is the Disintegrin domain; sequence PPVCGNYYTE…AECPNKGYYG (85 aa). 7 cysteine pairs are disulfide-bonded: cysteine 405/cysteine 424, cysteine 416/cysteine 434, cysteine 418/cysteine 429, cysteine 428/cysteine 451, cysteine 442/cysteine 448, cysteine 447/cysteine 472, and cysteine 460/cysteine 479. The Cell attachment site motif lies at 464-466; the sequence is RGD.

It belongs to the venom metalloproteinase (M12B) family. P-II subfamily. P-IIb sub-subfamily. As to quaternary structure, monomer. Zn(2+) serves as cofactor. As to expression, expressed by the venom gland.

It localises to the secreted. In terms of biological role, snake venom zinc metalloproteinase that inhibits ADP-induced platelet aggregation (probably by binding integrin alpha-IIb/beta-3 (ITGA2B/ITGB3)) and degrades fibrinogen. The chain is Zinc metalloproteinase-disintegrin VMP-II from Crotalus atrox (Western diamondback rattlesnake).